We begin with the raw amino-acid sequence, 92 residues long: Small ribosomal subunit protein uS19 (92 aa).

The protein belongs to the universal ribosomal protein uS19 family.

In terms of biological role, protein S19 forms a complex with S13 that binds strongly to the 16S ribosomal RNA. The protein is Small ribosomal subunit protein uS19 of Prochlorococcus marinus (strain MIT 9215).